The chain runs to 542 residues: Glucose-6-phosphate isomerase (542 aa).

Glu-353 serves as the catalytic Proton donor. Residues His-384 and Lys-508 contribute to the active site.

This sequence belongs to the GPI family.

It localises to the cytoplasm. It carries out the reaction alpha-D-glucose 6-phosphate = beta-D-fructose 6-phosphate. Its pathway is carbohydrate biosynthesis; gluconeogenesis. It participates in carbohydrate degradation; glycolysis; D-glyceraldehyde 3-phosphate and glycerone phosphate from D-glucose: step 2/4. Catalyzes the reversible isomerization of glucose-6-phosphate to fructose-6-phosphate. The protein is Glucose-6-phosphate isomerase of Corynebacterium efficiens (strain DSM 44549 / YS-314 / AJ 12310 / JCM 11189 / NBRC 100395).